A 507-amino-acid chain; its full sequence is Sugar transport protein 8 (507 aa).

The Cytoplasmic portion of the chain corresponds to 1 to 21 (MAVVISSNGNSKSFDAKMTVY). 12 helical membrane passes run 22–42 (VFIC…DIGI), 79–99 (FLQL…FFAS), 116–136 (IFFL…MLII), 139–159 (ILLG…LSEI), 166–186 (GGLN…ANIV), 200–220 (IALG…LLIC), 281–301 (FVIG…AIMF), 319–339 (LSAV…IFLV), 346–366 (FLLL…GIIL), 382–402 (LVVV…WGPL), 419–439 (GFAL…QAFL), and 448–468 (GIFF…LFFV). At 469 to 507 (PETKGVSIDDMRDSVWKLHWYWKRFMLEEDEHDVEKRTD) the chain is on the cytoplasmic side.

It belongs to the major facilitator superfamily. Sugar transporter (TC 2.A.1.1) family.

It is found in the membrane. Its function is as follows. Mediates an active uptake of hexoses, probably by sugar/hydrogen symport. The chain is Sugar transport protein 8 (STP8) from Arabidopsis thaliana (Mouse-ear cress).